A 258-amino-acid chain; its full sequence is Ferredoxin--NADP reductase (258 aa).

The FAD-binding FR-type domain maps to 2-102; sequence SNLYTERVLS…RKPTGTLVHD (101 aa). Residues Arg51, Ala52, Tyr53, Ser54, Phe67, Ile69, Leu76, Thr77, and Thr117 each contribute to the FAD site. 9 residues coordinate NADP(+): Val144, Arg145, Thr181, Arg182, Arg190, Ser223, Glu227, Phe255, and Glu257. Residues Phe255, Glu257, and Lys258 each contribute to the FAD site.

It belongs to the ferredoxin--NADP reductase type 1 family. As to quaternary structure, monomer. The cofactor is FAD.

The catalysed reaction is 2 reduced [2Fe-2S]-[ferredoxin] + NADP(+) + H(+) = 2 oxidized [2Fe-2S]-[ferredoxin] + NADPH. Its function is as follows. Transports electrons between ferredoxin and NADPH. Provides electrons to heme oxygenase (pigA) allowing anaerobic heme degradation. Provides electrons necessary to reduce and mobilize Fe(3+) in a heterooligomeric bacterioferritin (BFR) complex to Fe(2+). Reduction of Fe(3+) in a pure FtnA BFR does not require Bfd. Reduction of Fe(3+) in a pure BfrB BFR does require Bfd. The sequence is that of Ferredoxin--NADP reductase from Pseudomonas aeruginosa (strain ATCC 15692 / DSM 22644 / CIP 104116 / JCM 14847 / LMG 12228 / 1C / PRS 101 / PAO1).